The sequence spans 3008 residues: MSTNPKPQRKTKRNTNRRPMDVKFPGGGQIVGGVYLLPRRGPRLGVRATRKTSERSQPRGRRQPIPKARRPEGRSWAQPGYPWPLYGNEGCGWAGWLLSPRGSRPSWGPNDPRGRSRNLGKVIDTLTCGFADLMGYIPLVGAPVGSVARALAHGVRALEDGINYATGNLPGCSFSIFLLALLSCLTVPASAVNYRNVSGIYHVTNDCPNSSIVYEADHHIMHLPGCVPCVREGNQSRCWVALTPTVAAPYIGAPLESLRSHVDLMVGAATVCSGLYIGDLCGGLFLVGQMFSFRPRRHWTTQDCNCSIYTGHITGHRMAWDMMMNWSPTTTLVLAQVMRIPTTLVDLLSGGHWGVLVGVAYFSMQANWAKVILVLFLFAGVDAETHVSGAAVGRSTAGLANLFSSGSKQNLQLINSNGSWHINRTALNCNDSLNTGFLASLFYTHKFNSSGCSERLACCKSLDSYGQGWGPLGVANISGSSDDRPYCWHYAPRPCGIVPASSVCGPVYCFTPSPVVVGTTDHVGVPTYTWGENETDVFLLNSTRPPHGAWFGCVWMNSTGFTKTCGAPPCEVNTNNGTWHCPTDCFRKHPETTYAKCGSGPWITPRCLIDYPYRLWHFPCTANFSVFNIRTFVGGIEHRMQAACNWTRGEVCGLEHRDRVELSPLLLTTTAWQILPCSFTTLPALSTGLIHLHQNIVDVQYLYGVGSAVVSWALKWEYVVLAFLLLADARVSAYLWMMFMVSQVEAALSNLININAASAAGAQGFWYAILFICIVWHVKGRFPAAAAYAACGLWPCFLLLLMLPERAYAYDQEVAGSLGGAIVVMLTILTLSPHYKLWLARGLWWIQYFIARTEAVLHVYIPSFNVRGPRDSVIVLAVLVCPDLVFDITKYLLAILGPLHILQASLLRIPYFVRAQALVKICSLLRGVVYGKYFQMVVLKSRGLTGTYIYDHLTPMSDWPPYGLRDLAVALEPVVFTPMEKKVIVWGADTAACGDIIRGLPVSARLGNEILLGPADTETSKGWRLLAPITAYAQQTRGLFSTIVTSLTGRDTNENCGEVQVLSTATQSFLGTAVNGVMWTVYHGAGAKTISGPKGPVNQMYTNVDQDLVGWPAPPGVRSLAPCTCGSADLYLVTRHADVIPVRRRGDTRGALLSPRPISILKGSSGGPLLCPMGHRAGIFRAAVCTRGVAKAVDFVPVESLETTMRSPVFTDNSTPPAVPQTYQVAHLHAPTGSGKSTKVPAAHAAQGYKVLVLNPSVAATLGFGVYMSKAYGIDPNIRSGVRTITTGAPITYSTYGKFLADGGCSGGAYDIIICDECYSTDSTTILGIGTVLDQAETAGVRLTVLATATPPGSVTTPHSNIEEVALPTTGEIPFYGKAIPLELIKGGRHLIFCHSKKKCDELARQLTSLGLNAVAYYRGLDVSVIPTSGDVVVCATDALMTGFTGDFDSVIDCNTSVIQTVDFSLDPTFSIEITTVPQDAVSRSQRRGRTGRGRLGTYRYVTPGERPSGMFDTAELCECYDAGCAWYELTPAETTTRLKAYFDTPGLPVCQDHLEFWESVFTGLTHIDGHFLSQTKQSGENFPYLVAYQATVSAKVWLAPPSWDTMWKCLIRLKPTLHGPTPLLYRLGSVQNEVVLTHPITKYIMACMSADLEVVTSTWVLVGGVLAALAAYCLSVGSVVIVGRVVLSGQPAVIPDREVLYQQFDEMEECSKHLPLVEHGLQLAEQFKQKALGLLNFAGKQAQEATPVIQSNFAKLEQFWANDMWNFISGIQYLAGLSTLPGNPAIASLMSFTAAVTSPLTTQQTLLFNILGGWVASQIRDSDASTAFVVSGLAGAAVGSVGLGKILVDILPGYGAGVRGAVVTFKIMSGEMPSTEDLVNLLPAILSPGALVVEVVCPAILRRHVGPGEGAVQWMNRLIAFASRGNHVSPTHYVPESDAARRVTTILSSLTVTSLLRRLHKWINEDCSTPCAESWLWEVWDWVLHVLSDFKTCLKAKFVPLMPGIPLLSWPRGYKGEWRGDGVMHTTCPCGADLAGHIKNGSMRITGPKTCSNTWHGTFPINAYTTGPGVPIPAPNYKFALWRVSAEDYVEVRRVGDFHYVTGVTQDNIKFPCQVPAPELFTEVDGIRIHRHAPKCKPLLRDEVSFSVGLNSFVVGSQLPCEPEPDVAVLTSMLTDPSHITAESARRRLARGSRPSLASSSASQLSPRLLQATCTAPHDSPGTDLLEANLLWGSTATRVETDEKVIILDSFESCVAEQNDDREVSVAAEILRPTKKFPPALPIWARPDYNPPLTETWKQQDYQAPTVHGCALPPAKQPPVPSPRRKRTVQLTESVVSTALAELAAKTFGQSEPSSDRDTDLTTPTETTDSGPIVVDDASDDGSYSSMPPLEGEPGDPDLTSDSWSTVSGSEDVVCCSMSYSWTGALVTPCAAEESKLPISPLSNSLLRHHNMVYATTTRSAVTRQKKVTFDRLQVVDSTYNEVLKEIKARASRVKPRLLTTEEACDLTPPHSARSKFGYGKKDVRSHSRKAINHISSVWKDLLDDNNTPIPTTIMAKNEVFAVNPAKGGRKPARLIVYPDLGSRVCEKRALHDVIKKTALAVMGAAYGFQYSPAQRVEFLLTAWKSKNDPMGFSYDTRCFDSTVTEKDIRVEEEVYQCCDLEPEARKVITALTDRLYVGGPMHNSKGDLCGYRRCRATGVYTTSFGNTLTCYLKATAAIRAAALRDCTMLVCGDDLVVIAESDGVEEDNRALRAFTEAMTRYSAPPGDAPQPAYDLELITSCSSNVSVAHDVTGKKVYYLTRDPETPLARAVWETVRHTPVNSWLGNIIVYAPTIWVRMILMTHFFSILQSQEALEKALDFDMYGVTYSITPLDLPAIIQRLHGLSAFTLHGYSPHELNRVAGALRKLGVPPLRAWRHRARAVRAKLIAQGGRAKICGIYLFNWAVKTKLKLTPLPAAAKLDLSGWFTVGAGGGDIYHSMSHARPRYLLLCLLILTVGVGIFLLPAR.

The residue at position 2 (Ser2) is an N-acetylserine; by host. Positions 2-23 (STNPKPQRKTKRNTNRRPMDVK) are interaction with STAT1. The tract at residues 2–58 (STNPKPQRKTKRNTNRRPMDVKFPGGGQIVGGVYLLPRRGPRLGVRATRKTSERSQP) is interaction with EIF2AK2/PKR. Residues 2 to 59 (STNPKPQRKTKRNTNRRPMDVKFPGGGQIVGGVYLLPRRGPRLGVRATRKTSERSQPR) form an interaction with DDX3X region. The segment at 2–75 (STNPKPQRKT…PKARRPEGRS (74 aa)) is disordered. Residues 2–168 (STNPKPQRKT…EDGINYATGN (167 aa)) are Cytoplasmic-facing. 2 consecutive short sequence motifs (nuclear localization signal) follow at residues 5–13 (PKPQRKTKR) and 38–43 (PRRGPR). Over residues 7–16 (PQRKTKRNTN) the composition is skewed to basic residues. Positions 32–47 (GGVYLLPRRGPRLGVR) are enriched in low complexity. Ser53 is modified (phosphoserine; by host). 2 consecutive short sequence motifs (nuclear localization signal) follow at residues 58–64 (PRGRRQP) and 66–71 (PKARRP). Positions 58–68 (PRGRRQPIPKA) are enriched in basic residues. Ser99 and Ser116 each carry phosphoserine; by host. Positions 112-152 (PRGRSRNLGKVIDTLTCGFADLMGYIPLVGAPVGSVARALA) are important for endoplasmic reticulum and mitochondrial localization. Residues 122–173 (VIDTLTCGFADLMGYIPLVGAPVGSVARALAHGVRALEDGINYATGNLPGCS) are interaction with APOA2. Positions 164 to 167 (YATG) are important for lipid droplets localization. The helical transmembrane segment at 169–189 (LPGCSFSIFLLALLSCLTVPA) threads the bilayer. Residues 178-191 (LLALLSCLTVPASA) constitute a propeptide, ER anchor for the core protein, removed in mature form by host signal peptidase. The Lumenal segment spans residues 190–358 (SAVNYRNVSG…SGGHWGVLVG (169 aa)). N-linked (GlcNAc...) asparagine; by host glycans are attached at residues Asn196, Asn209, and Asn234. The segment at 265–296 (MVGAATVCSGLYIGDLCGGLFLVGQMFSFRPR) is important for fusion. Residue Asn305 is glycosylated (N-linked (GlcNAc...) asparagine; by host). Residues 359–379 (VAYFSMQANWAKVILVLFLFA) form a helical membrane-spanning segment. Over 380-725 (GVDAETHVSG…WEYVVLAFLL (346 aa)) the chain is Lumenal. Positions 385–412 (THVSGAAVGRSTAGLANLFSSGSKQNLQ) are HVR1. N-linked (GlcNAc...) (high mannose) asparagine; by host glycans are attached at residues Asn417, Asn423, and Asn430. Disulfide bonds link Cys429–Cys553, Cys452–Cys459, Cys487–Cys495, and Cys504–Cys509. N-linked (GlcNAc...) asparagine; by host glycosylation occurs at Asn448. The segment at 475–479 (ANISG) is HVR2. N-linked (GlcNAc...) asparagine; by host glycosylation occurs at Asn476. The tract at residues 481–494 (SDDRPYCWHYAPRP) is CD81-binding 1. Asn533 is a glycosylation site (N-linked (GlcNAc...) asparagine; by host). Residues 545–552 (PPHGAWFG) are CD81-binding 2. Asn557 carries an N-linked (GlcNAc...) asparagine; by host glycan. Intrachain disulfides connect Cys565–Cys570, Cys581–Cys585, Cys597–Cys620, and Cys607–Cys644. Residues Asn623 and Asn645 are each glycosylated (N-linked (GlcNAc...) (high mannose) asparagine; by host). Cys652 and Cys677 are disulfide-bonded. Residues 660–671 (VELSPLLLTTTA) are PKR/eIF2-alpha phosphorylation homology domain (PePHD). A helical transmembrane segment spans residues 726-746 (LADARVSAYLWMMFMVSQVEA). Over 747–757 (ALSNLININAA) the chain is Lumenal. Residues 758–778 (SAAGAQGFWYAILFICIVWHV) form a helical membrane-spanning segment. Topologically, residues 779–782 (KGRF) are cytoplasmic. The helical transmembrane segment at 783 to 803 (PAAAAYAACGLWPCFLLLLML) threads the bilayer. At 804–813 (PERAYAYDQE) the chain is on the lumenal side. Residues 814-834 (VAGSLGGAIVVMLTILTLSPH) traverse the membrane as a helical segment. The Cytoplasmic portion of the chain corresponds to 835–881 (YKLWLARGLWWIQYFIARTEAVLHVYIPSFNVRGPRDSVIVLAVLVC). Residues 882-902 (PDLVFDITKYLLAILGPLHIL) traverse the membrane as a helical segment. Over 903-928 (QASLLRIPYFVRAQALVKICSLLRGV) the chain is Lumenal. The Peptidase C18 domain occupies 903–1026 (QASLLRIPYF…TETSKGWRLL (124 aa)). Positions 904-1206 (ASLLRIPYFV…PVESLETTMR (303 aa)) are protease NS2-3. Cys922 carries S-palmitoyl cysteine; by host lipidation. Residues 929–949 (VYGKYFQMVVLKSRGLTGTYI) traverse the membrane as a helical segment. Residues 929–949 (VYGKYFQMVVLKSRGLTGTYI) form an interaction with host SCPS1 region. Residues 950 to 1657 (YDHLTPMSDW…CMSADLEVVT (708 aa)) are Cytoplasmic-facing. Active-site for protease NS2 activity; shared with dimeric partner residues include His952, Glu972, and Cys993. The Peptidase S29 domain occupies 1027-1208 (APITAYAQQT…ESLETTMRSP (182 aa)). Active-site charge relay system; for serine protease NS3 activity residues include His1083 and Asp1107. Zn(2+)-binding residues include Cys1123 and Cys1125. Catalysis depends on Ser1165, which acts as the Charge relay system; for serine protease NS3 activity. Zn(2+) is bound by residues Cys1171 and His1175. In terms of domain architecture, Helicase ATP-binding spans 1217–1369 (PAVPQTYQVA…SNIEEVALPT (153 aa)). 1230–1237 (APTGSGKS) provides a ligand contact to ATP. The Mg(2+) site is built by Ser1237 and Glu1317. Positions 1316–1319 (DECY) match the DECH box motif. The tract at residues 1486–1498 (QRRGRTGRGRLGT) is RNA-binding. The chain crosses the membrane as a helical span at residues 1658–1678 (STWVLVGGVLAALAAYCLSVG). Residues 1679–1690 (SVVIVGRVVLSG) form an NS3-binding region. Residues 1679 to 1805 (SVVIVGRVVL…AVTSPLTTQQ (127 aa)) are Cytoplasmic-facing. Residues 1806-1826 (TLLFNILGGWVASQIRDSDAS) traverse the membrane as a helical segment. The Lumenal portion of the chain corresponds to 1827 to 1828 (TA). A helical transmembrane segment spans residues 1829–1849 (FVVSGLAGAAVGSVGLGKILV). Position 1850 (Asp1850) is a topological domain, cytoplasmic. The helical transmembrane segment at 1851–1871 (ILPGYGAGVRGAVVTFKIMSG) threads the bilayer. The Lumenal segment spans residues 1872 to 1881 (EMPSTEDLVN). A helical transmembrane segment spans residues 1882-1902 (LLPAILSPGALVVEVVCPAIL). The Cytoplasmic portion of the chain corresponds to 1903-1972 (RRHVGPGEGA…WINEDCSTPC (70 aa)). Cys1972 carries S-palmitoyl cysteine; by host lipidation. The stretch at 1973-2002 (AESWLWEVWDWVLHVLSDFKTCLKAKFVPL) is an intramembrane region. The Cytoplasmic portion of the chain corresponds to 2003–2987 (MPGIPLLSWP…YHSMSHARPR (985 aa)). Positions 2029, 2031, and 2052 each coordinate Zn(2+). The FKBP8-binding stretch occupies residues 2120–2208 (ELFTEVDGIR…ASSSASQLSP (89 aa)). A transcriptional activation region spans residues 2120 to 2329 (ELFTEVDGIR…PVPSPRRKRT (210 aa)). The tract at residues 2135 to 2139 (PKCKP) is interaction with non-structural protein 4A. The interval 2189 to 2435 (RLARGSRPSL…ALVTPCAAEE (247 aa)) is interaction with host SKP2. 5 positions are modified to phosphoserine; by host: Ser2194, Ser2197, Ser2201, Ser2204, and Ser2207. Positions 2210–2245 (LLQATCTAPHDSPGTDLLEANLLWGSTATRVETDEK) are ISDR. Residues 2210 to 2272 (LLQATCTAPH…REVSVAAEIL (63 aa)) form an interaction with EIF2AK2/PKR region. An NS4B-binding region spans residues 2245 to 2303 (KVIILDSFESCVAEQNDDREVSVAAEILRPTKKFPPALPIWARPDYNPPLTETWKQQDY). A V3 region spans residues 2296 to 2373 (ETWKQQDYQA…TPTETTDSGP (78 aa)). The SH3-binding signature appears at 2319–2322 (PPVP). The Nuclear localization signal motif lies at 2324–2332 (PRRKRTVQL). The disordered stretch occupies residues 2346 to 2406 (AKTFGQSEPS…DPDLTSDSWS (61 aa)). Lys2347 participates in a covalent cross-link: Glycyl lysine isopeptide (Lys-Gly) (interchain with G-Cter in ubiquitin). Residue Ser2446 is modified to Phosphoserine; by host. Residues 2631–2749 (PMGFSYDTRC…IAESDGVEED (119 aa)) form the RdRp catalytic domain. Mg(2+)-binding residues include Asp2637, Asp2735, and Asp2736. The helical transmembrane segment at 2988–3008 (YLLLCLLILTVGVGIFLLPAR) threads the bilayer.

This sequence belongs to the hepacivirus polyprotein family. Homooligomer. Interacts with E1 (via C-terminus). Interacts with the non-structural protein 5A. Interacts (via N-terminus) with host STAT1 (via SH2 domain); this interaction results in decreased STAT1 phosphorylation and ubiquitin-mediated proteasome-dependent STAT1 degradation, leading to decreased IFN-stimulated gene transcription. Interacts with host STAT3; this interaction constitutively activates STAT3. Interacts with host LTBR receptor. Interacts with host TNFRSF1A receptor and possibly induces apoptosis. Interacts with host HNRPK. Interacts with host YWHAE. Interacts with host UBE3A/E6AP. Interacts with host DDX3X. Interacts with host APOA2. Interacts with host RXRA protein. Interacts with host SP110 isoform 3/Sp110b; this interaction sequesters the transcriptional corepressor SP110 away from the nucleus. Interacts with host CREB3 nuclear transcription protein; this interaction triggers cell transformation. Interacts with host ACY3. Interacts with host C1QR1. Interacts with host RBM24; this interaction, which enhances the interaction of the mature core protein with 5'-UTR, may inhibit viral translation and favor replication. Interacts with host EIF2AK2/PKR; this interaction induces the autophosphorylation of EIF2AK2. Part of the viral assembly initiation complex composed of NS2, E1, E2, NS3, NS4A, NS5A and the mature core protein. In terms of assembly, forms a heterodimer with envelope glycoprotein E2. Interacts with mature core protein. Interacts with protease NS2. The heterodimer E1/E2 interacts with host CLDN1; this interaction plays a role in viral entry into host cell. Interacts with host SPSB2 (via C-terminus). Part of the viral assembly initiation complex composed of NS2, E1, E2, NS3, NS4A, NS5A and the mature core protein. Interacts with host NEURL3; this interaction prevents E1 binding to glycoprotein E2. As to quaternary structure, forms a heterodimer with envelope glycoprotein E1. Interacts with host CD81 and SCARB1 receptors; these interactions play a role in viral entry into host cell. Interacts with host EIF2AK2/PKR; this interaction inhibits EIF2AK2 and probably allows the virus to evade the innate immune response. Interacts with host CD209/DC-SIGN and CLEC4M/DC-SIGNR. Interact with host SPCS1; this interaction is essential for viral particle assembly. Interacts with protease NS2. The heterodimer E1/E2 interacts with host CLDN1; this interaction plays a role in viral entry into host cell. Part of the viral assembly initiation complex composed of NS2, E1, E2, NS3, NS4A, NS5A and the mature core protein. Interacts with host SLC3A2/4F2hc; the interaction may facilitate viral entry into host cell. Interacts with human PLSCR1. Homohexamer. Homoheptamer. Interacts with protease NS2. In terms of assembly, homodimer. Interacts with host SPCS1; this interaction is essential for viral particle assembly. Interacts with envelope glycoprotein E1. Interacts with envelope glycoprotein E2. Interacts with viroporin p7. Interacts with serine protease/helicase NS3. Part of the replication complex composed of NS2, NS3, NS4A, NS4B, NS5A and the RNA-directed RNA polymerase embedded in an ER-derived membranous web. Part of the viral assembly initiation complex composed of NS2, E1, E2, NS3, NS4A, NS5A and the mature core protein. As to quaternary structure, interacts with protease NS2. Interacts with non-structural protein 4A; this interaction stabilizes the folding of NS3 serine protease. NS3-NS4A interaction is essential for NS3 activation and allows membrane anchorage of the latter. NS3/NS4A complex also prevents phosphorylation of host IRF3, thus preventing the establishment of dsRNA induced antiviral state. Interacts with host MAVS; this interaction leads to the cleavage and inhibition of host MAVS. Interacts with host TICAM1; this interaction leads to the cleavage and inhibition of host TICAM1. Interacts with host TANK-binding kinase/TBK1; this interaction results in the inhibition of the association between TBK1 and IRF3, which leads to the inhibition of IRF3 activation. Interacts with host RBM24. Part of the replication complex composed of NS2, NS3, NS4A, NS4B, NS5A and the RNA-directed RNA polymerase embedded in an ER-derived membranous web. Part of the viral assembly initiation complex composed of NS2, E1, E2, NS3, NS4A, NS5A and the mature core protein. Interacts with NS3 serine protease; this interaction stabilizes the folding of NS3 serine protease. NS3-NS4A interaction is essential for NS3 activation and allows membrane anchorage of the latter. Interacts with non-structural protein 5A (via N-terminus). Part of the replication complex composed of NS2, NS3, NS4A, NS4B, NS5A and the RNA-directed RNA polymerase embedded in an ER-derived membranous web. Part of the viral assembly initiation complex composed of NS2, E1, E2, NS3, NS4A, NS5A and the mature core protein. In terms of assembly, homomultimer. Interacts with non-structural protein NS5A. Interacts with host PLA2G4C; this interaction likely initiates the recruitment of replication complexes to lipid droplets. Interacts with host STING; this interaction disrupts the interaction between STING and TBK1 thereby suppressing the interferon signaling. Part of the replication complex composed of NS2, NS3, NS4A, NS4B, NS5A and the RNA-directed RNA polymerase embedded in an ER-derived membranous web. As to quaternary structure, monomer. Homodimer; dimerization is required for RNA-binding. Interacts with the mature core protein. Interacts (via N-terminus) with non-structural protein 4A. Interacts with non-structural protein 4B. Interacts (via region D2) with RNA-directed RNA polymerase. Part of the viral assembly initiation complex composed of NS2, E1, E2, NS3, NS4A, NS5A and the mature core protein. Part of the replication complex composed of NS2, NS3, NS4A, NS4B, NS5A and the RNA-directed RNA polymerase embedded in an ER-derived membranous web. Interacts with host GRB2. Interacts with host BIN1. Interacts with host PIK3R1. Interacts with host SRCAP. Interacts with host FKBP8. Interacts (via C-terminus) with host VAPB (via MSP domain). Interacts with host EIF2AK2/PKR; this interaction leads to disruption of EIF2AK2 dimerization by NS5A and probably allows the virus to evade the innate immune response. Interacts (via N-terminus) with host PACSIN2 (via N-terminus); this interaction attenuates protein kinase C alpha-mediated phosphorylation of PACSIN2 by disrupting the interaction between PACSIN2 and PRKCA. Interacts (via N-terminus) with host SRC kinase (via SH2 domain). Interacts with most Src-family kinases. Interacts with host IFI27 and SKP2; promotes the ubiquitin-mediated proteasomal degradation of NS5A. Interacts with host GPS2. Interacts with host TNFRSF21; this interaction allows the modulation by the virus of JNK, p38 MAPK, STAT3, and Akt signaling pathways in a DR6-dependent manner. Interacts (via N-terminus) with host CIDEB (via N-terminus); this interaction seems to regulate the association of HCV particles with APOE. Interacts with host CHKA/Choline Kinase-alpha; CHKA bridges host PI4KA and NS5A and potentiates NS5A-stimulated PI4KA activity, which then facilitates the targeting of the ternary complex to the ER for viral replication. Interacts with host SPSB2 (via C-terminus); this interaction targets NS5A for ubiquitination and degradation. Interacts with host RAB18; this interaction may promote the association of NS5A and other replicase components with lipid droplets. Interacts (via region D2) with host PPIA/CYPA; the interaction stimulates RNA-binding ability of NS5A and is dependent on the peptidyl-prolyl cis-trans isomerase activity of PPIA/CYPA. Interacts with host TRIM14; this interaction induces the degradation of NS5A. Homooligomer. Interacts with non-structural protein 5A. Interacts with host VAPB. Interacts with host PRK2/PKN2. Interacts with host HNRNPA1 and SEPT6; these interactions facilitate viral replication. Part of the replication complex composed of NS2, NS3, NS4A, NS4B, NS5A and the RNA-directed RNA polymerase. It depends on Zn(2+) as a cofactor. Requires Mg(2+) as cofactor. Post-translationally, specific enzymatic cleavages in vivo yield mature proteins. The structural proteins, core, E1, E2 and p7 are produced by proteolytic processing by host signal peptidases. The core protein precursor is synthesized as a 23 kDa, which is retained in the ER membrane through the hydrophobic signal peptide. Cleavage by the signal peptidase releases the 21 kDa mature core protein. The cleavage of the core protein precursor occurs between aminoacids 176 and 188 but the exact cleavage site is not known. Some degraded forms of the core protein appear as well during the course of infection. The other proteins (p7, NS2, NS3, NS4A, NS4B, NS5A and NS5B) are cleaved by the viral proteases. Autoprocessing between NS2 and NS3 is mediated by the NS2 cysteine protease catalytic domain and regulated by the NS3 N-terminal domain. In terms of processing, phosphorylated by host PKC and PKA. Ubiquitinated; mediated by UBE3A and leading to core protein subsequent proteasomal degradation. Post-translationally, highly N-glycosylated. In terms of processing, palmitoylation is required for NS2/3 autoprocessing and E2 recruitment to membranes. Palmitoylated. This modification may play a role in its polymerization or in protein-protein interactions. Post-translationally, phosphorylated on serines in a basal form termed p56. p58 is a hyperphosphorylated form of p56. p56 and p58 coexist in the cell in roughly equivalent amounts. Hyperphosphorylation is dependent on the presence of NS4A. Host CSNK1A1/CKI-alpha or RPS6KB1 kinases may be responsible for NS5A phosphorylation. In terms of processing, tyrosine phosphorylation is essential for the interaction with host SRC. The N-terminus is phosphorylated by host PRK2/PKN2.

The protein resides in the host endoplasmic reticulum membrane. The protein localises to the host mitochondrion membrane. It localises to the virion. It is found in the host cytoplasm. Its subcellular location is the host nucleus. The protein resides in the host lipid droplet. The protein localises to the virion membrane. It localises to the host mitochondrion. It is found in the host cell membrane. Its subcellular location is the host perinuclear region. The enzyme catalyses Hydrolysis of four peptide bonds in the viral precursor polyprotein, commonly with Asp or Glu in the P6 position, Cys or Thr in P1 and Ser or Ala in P1'.. It carries out the reaction a ribonucleoside 5'-triphosphate + H2O = a ribonucleoside 5'-diphosphate + phosphate + H(+). It catalyses the reaction ATP + H2O = ADP + phosphate + H(+). The catalysed reaction is RNA(n) + a ribonucleoside 5'-triphosphate = RNA(n+1) + diphosphate. Inhibited by the antiviral drug hexamethylene amiloride. Inhibition by amantadine appears to be genotype-dependent. Also inhibited by long-alkyl-chain iminosugar derivatives. Its activity is regulated as follows. Activity is up-regulated by PRK2/PKN2-mediated phosphorylation. In terms of biological role, packages viral RNA to form a viral nucleocapsid, and promotes virion budding. Participates in the viral particle production as a result of its interaction with the non-structural protein 5A. Binds RNA and may function as a RNA chaperone to induce the RNA structural rearrangements taking place during virus replication. Modulates viral translation initiation by interacting with viral IRES and 40S ribosomal subunit. Affects various cell signaling pathways, host immunity and lipid metabolism. Prevents the establishment of cellular antiviral state by blocking the interferon-alpha/beta (IFN-alpha/beta) and IFN-gamma signaling pathways and by blocking the formation of phosphorylated STAT1 and promoting ubiquitin-mediated proteasome-dependent degradation of STAT1. Activates STAT3 leading to cellular transformation. Regulates the activity of cellular genes, including c-myc and c-fos. May repress the promoter of p53, and sequester CREB3 and SP110 isoform 3/Sp110b in the cytoplasm. Represses cell cycle negative regulating factor CDKN1A, thereby interrupting an important check point of normal cell cycle regulation. Targets transcription factors involved in the regulation of inflammatory responses and in the immune response: suppresses TNF-induced NF-kappa-B activation, and activates AP-1. Binds to dendritic cells (DCs) via C1QR1, resulting in down-regulation of T-lymphocytes proliferation. Alters lipid metabolism by interacting with hepatocellular proteins involved in lipid accumulation and storage. Induces up-regulation of FAS promoter activity, and thereby contributes to the increased triglyceride accumulation in hepatocytes (steatosis). Its function is as follows. Forms a heterodimer with envelope glycoprotein E2, which mediates virus attachment to the host cell, virion internalization through clathrin-dependent endocytosis and fusion with host membrane. Fusion with the host cell is most likely mediated by both E1 and E2, through conformational rearrangements of the heterodimer required for fusion rather than a classical class II fusion mechanism. E1/E2 heterodimer binds host apolipoproteins such as APOB and ApoE thereby forming a lipo-viro-particle (LVP). APOE associated to the LVP allows the initial virus attachment to cell surface receptors such as the heparan sulfate proteoglycans (HSPGs), syndecan-1 (SDC1), syndecan-1 (SDC2), the low-density lipoprotein receptor (LDLR) and scavenger receptor class B type I (SCARB1). The cholesterol transfer activity of SCARB1 allows E2 exposure and binding of E2 to SCARB1 and the tetraspanin CD81. E1/E2 heterodimer binding on CD81 activates the epithelial growth factor receptor (EGFR) signaling pathway. Diffusion of the complex E1-E2-EGFR-SCARB1-CD81 to the cell lateral membrane allows further interaction with Claudin 1 (CLDN1) and occludin (OCLN) to finally trigger HCV entry. Functionally, forms a heterodimer with envelope glycoprotein E1, which mediates virus attachment to the host cell, virion internalization through clathrin-dependent endocytosis and fusion with host membrane. Fusion with the host cell is most likely mediated by both E1 and E2, through conformational rearrangements of the heterodimer required for fusion rather than a classical class II fusion mechanism. The interaction between envelope glycoprotein E2 and host apolipoprotein E/APOE allows the proper assembly, maturation and infectivity of the viral particles. This interaction is probably promoted via the up-regulation of cellular autophagy by the virus. E1/E2 heterodimer binds host apolipoproteins such as APOB and APOE thereby forming a lipo-viro-particle (LVP). APOE associated to the LVP allows the initial virus attachment to cell surface receptors such as the heparan sulfate proteoglycans (HSPGs), syndecan-1 (SDC1), syndecan-1 (SDC2), the low-density lipoprotein receptor (LDLR) and scavenger receptor class B type I (SCARB1). The cholesterol transfer activity of SCARB1 allows E2 exposure and binding of E2 to SCARB1 and the tetraspanin CD81. E1/E2 heterodimer binding on CD81 activates the epithelial growth factor receptor (EGFR) signaling pathway. Diffusion of the complex E1-E2-EGFR-SCARB1-CD81 to the cell lateral membrane allows further interaction with Claudin 1 (CLDN1) and occludin (OCLN) to finally trigger HCV entry. Inhibits host EIF2AK2/PKR activation, preventing the establishment of an antiviral state. Viral ligand for CD209/DC-SIGN and CLEC4M/DC-SIGNR, which are respectively found on dendritic cells (DCs), and on liver sinusoidal endothelial cells and macrophage-like cells of lymph node sinuses. These interactions allow the capture of circulating HCV particles by these cells and subsequent facilitated transmission to permissive cells such as hepatocytes and lymphocyte subpopulations. The interaction between E2 and host amino acid transporter complex formed by SLC3A2 and SLC7A5/LAT1 may facilitate viral entry into host cell. Ion channel protein that acts as a viroporin and plays an essential role in the assembly, envelopment and secretion of viral particles. Regulates the host cell secretory pathway, which induces the intracellular retention of viral glycoproteins and favors assembly of viral particles. Creates a pore in acidic organelles and releases Ca(2+) and H(+) in the cytoplasm of infected cells, leading to a productive viral infection. High levels of cytoplasmic Ca(2+) may trigger membrane trafficking and transport of viral ER-associated proteins to viroplasms, sites of viral genome replication. This ionic imbalance induces the assembly of the inflammasome complex, which triggers the maturation of pro-IL-1beta into IL-1beta through the action of caspase-1. Targets also host mitochondria and induces mitochondrial depolarization. In addition of its role as a viroporin, acts as a lipid raft adhesion factor. In terms of biological role, cysteine protease required for the proteolytic auto-cleavage between the non-structural proteins NS2 and NS3. The N-terminus of NS3 is required for the function of NS2 protease (active region NS2-3). Promotes the initiation of viral particle assembly by mediating the interaction between structural and non-structural proteins. Its function is as follows. Displays three enzymatic activities: serine protease with a chymotrypsin-like fold, NTPase and RNA helicase. NS3 serine protease, in association with NS4A, is responsible for the cleavages of NS3-NS4A, NS4A-NS4B, NS4B-NS5A and NS5A-NS5B. The NS3/NS4A complex prevents phosphorylation of host IRF3, thus preventing the establishment of dsRNA induced antiviral state. The NS3/NS4A complex induces host amino acid transporter component SLC3A2, thus contributing to HCV propagation. NS3 RNA helicase binds to RNA and unwinds both dsDNA and dsRNA in the 3' to 5' direction, and likely resolves RNA complicated stable secondary structures in the template strand. Binds a single ATP and catalyzes the unzipping of a single base pair of dsRNA. Inhibits host antiviral proteins TBK1 and IRF3 thereby preventing the establishment of an antiviral state. Cleaves host MAVS/CARDIF thereby preventing the establishment of an antiviral state. Cleaves host TICAM1/TRIF, thereby disrupting TLR3 signaling and preventing the establishment of an antiviral state. Functionally, induces a specific membrane alteration that serves as a scaffold for the virus replication complex. This membrane alteration gives rise to the so-called ER-derived membranous web that contains the replication complex. NS4B self-interaction contributes to its function in membranous web formation. Promotes host TRIF protein degradation in a CASP8-dependent manner thereby inhibiting host TLR3-mediated interferon signaling. Disrupts the interaction between STING and TBK1 contributing to the inhibition of interferon signaling. Phosphorylated protein that is indispensable for viral replication and assembly. Both hypo- and hyperphosphorylated states are required for the viral life cycle. The hyperphosphorylated form of NS5A is an inhibitor of viral replication. Involved in RNA-binding and especially in binding to the viral genome. Zinc is essential for RNA-binding. Participates in the viral particle production as a result of its interaction with the mature viral core protein. Its interaction with host VAPB may target the viral replication complex to vesicles. Down-regulates viral IRES translation initiation. Mediates interferon resistance, presumably by interacting with and inhibiting host EIF2AK2/PKR. Prevents BIN1-induced apoptosis. Acts as a transcriptional activator of some host genes important for viral replication when localized in the nucleus. Via the interaction with host PACSIN2, modulates lipid droplet formation in order to promote virion assembly. Modulates TNFRSF21/DR6 signaling pathway for viral propagation. In terms of biological role, RNA-dependent RNA polymerase that performs primer-template recognition and RNA synthesis during viral replication. Initiates RNA transcription/replication at a flavin adenine dinucleotide (FAD), resulting in a 5'- FAD cap on viral RNAs. In this way, recognition of viral 5' RNA by host pattern recognition receptors can be bypassed, thereby evading activation of antiviral pathways. The chain is Genome polyprotein from Homo sapiens (Human).